A 167-amino-acid chain; its full sequence is Small ribosomal subunit protein uS9 (167 aa).

Disordered stretches follow at residues 1–45 and 137–167; these read MSEY…GGAT and KAGF…FSKR. Residues 9–19 show a composition bias toward acidic residues; it reads DTVEDITESDE. Polar residues predominate over residues 20–36; it reads FTGTYTSESSTPATGGN. A compositionally biased stretch (basic and acidic residues) spans 143 to 152; sequence RDPRATERKK. Over residues 153–167 the composition is skewed to basic residues; the sequence is AGLKKARKAPQFSKR.

This sequence belongs to the universal ribosomal protein uS9 family.

This is Small ribosomal subunit protein uS9 from Kineococcus radiotolerans (strain ATCC BAA-149 / DSM 14245 / SRS30216).